The chain runs to 540 residues: Gamma-cadinene synthase (540 aa).

Residues D292, D296, D436, S440, and E444 each coordinate Mg(2+). The DDXXD motif signature appears at D292–D296.

It belongs to the terpene synthase family. Mg(2+) serves as cofactor. The cofactor is Mn(2+).

The enzyme catalyses (2E,6E)-farnesyl diphosphate = (+)-gamma-cadinene + diphosphate. It functions in the pathway secondary metabolite biosynthesis; terpenoid biosynthesis. Functionally, sesquiterpene synthase that catalyzes the cyclization of trans,trans-farnesyl diphosphate (FPP) to gamma cadinene. In Ocimum basilicum (Sweet basil), this protein is Gamma-cadinene synthase (CDS).